We begin with the raw amino-acid sequence, 268 residues long: Taurine import ATP-binding protein TauB (268 aa).

Positions 4-236 (LSINNLSMRF…LGVDSDLREV (233 aa)) constitute an ABC transporter domain. Position 41-48 (41-48 (GPSGCGKT)) interacts with ATP.

Belongs to the ABC transporter superfamily. Taurine importer (TC 3.A.1.17.1) family. The complex is composed of two ATP-binding proteins (TauB), two transmembrane proteins (TauC) and a solute-binding protein (TauA).

It is found in the cell inner membrane. The enzyme catalyses taurine(out) + ATP + H2O = taurine(in) + ADP + phosphate + H(+). Part of the ABC transporter complex TauABC involved in taurine import. Responsible for energy coupling to the transport system. This is Taurine import ATP-binding protein TauB from Roseobacter denitrificans (strain ATCC 33942 / OCh 114) (Erythrobacter sp. (strain OCh 114)).